The primary structure comprises 1857 residues: Fatty acid synthase subunit alpha (1857 aa).

Residues 96–132 (EEEPEATEPAPSATPAAPAAAPAAGAPPPPPSAGPAA) are disordered. The segment covering 102–119 (TEPAPSATPAAPAAAPAA) has biased composition (low complexity). The region spanning 139 to 214 (VTAVDILRTL…ASMQATFNGQ (76 aa)) is the Carrier domain. S174 is subject to O-(pantetheine 4'-phosphoryl)serine. The segment at 577–604 (QIIPQENGHSKKGGRSAAKRNTPTRPGK) is disordered. Positions 648 to 845 (KNVLMTGAGA…GAVIGWTRGT (198 aa)) are beta-ketoacyl reductase. The 542-residue stretch at 1092 to 1633 (LQEIVIQEDL…QKGAQVIGIH (542 aa)) folds into the Ketosynthase family 3 (KS3) domain. Residues C1275, H1518, and H1559 each act as for beta-ketoacyl synthase activity in the active site. Mg(2+) contacts are provided by D1743, V1744, and E1745. Residues 1743-1745 (DVE), Y1769, S1779, 1788-1798 (EAVFKSLGVSS), 1812-1815 (VDAN), and 1842-1844 (ISH) each bind acetyl-CoA. Residues S1843 and H1844 each contribute to the Mg(2+) site.

Belongs to the thiolase-like superfamily. Fungal fatty acid synthetase subunit alpha family. As to quaternary structure, [Alpha(6)beta(6)] hexamers of two multifunctional subunits (alpha and beta).

It catalyses the reaction acetyl-CoA + n malonyl-CoA + 2n NADPH + 4n H(+) = a long-chain-acyl-CoA + n CoA + n CO2 + 2n NADP(+).. It carries out the reaction a fatty acyl-[ACP] + malonyl-[ACP] + H(+) = a 3-oxoacyl-[ACP] + holo-[ACP] + CO2. The enzyme catalyses a (3R)-hydroxyacyl-[ACP] + NADP(+) = a 3-oxoacyl-[ACP] + NADPH + H(+). Its function is as follows. Fatty acid synthetase catalyzes the formation of long-chain fatty acids from acetyl-CoA, malonyl-CoA and NADPH. The alpha subunit contains domains for: acyl carrier protein, 3-oxoacyl-[acyl-carrier-protein] reductase, and 3-oxoacyl-[acyl-carrier-protein] synthase. The chain is Fatty acid synthase subunit alpha (FAS2) from Penicillium patulum (Penicillium griseofulvum).